The following is a 502-amino-acid chain: ATP synthase subunit alpha (502 aa).

A disordered region spans residues 115–136 (VDGLGPIHTTKTRPIESPAPGV). 169–176 (GDRQTGKT) lines the ATP pocket.

The protein belongs to the ATPase alpha/beta chains family. As to quaternary structure, F-type ATPases have 2 components, CF(1) - the catalytic core - and CF(0) - the membrane proton channel. CF(1) has five subunits: alpha(3), beta(3), gamma(1), delta(1), epsilon(1). CF(0) has three main subunits: a(1), b(2) and c(9-12). The alpha and beta chains form an alternating ring which encloses part of the gamma chain. CF(1) is attached to CF(0) by a central stalk formed by the gamma and epsilon chains, while a peripheral stalk is formed by the delta and b chains.

The protein resides in the cell membrane. The catalysed reaction is ATP + H2O + 4 H(+)(in) = ADP + phosphate + 5 H(+)(out). Produces ATP from ADP in the presence of a proton gradient across the membrane. The alpha chain is a regulatory subunit. This is ATP synthase subunit alpha from Bacillus cytotoxicus (strain DSM 22905 / CIP 110041 / 391-98 / NVH 391-98).